Consider the following 399-residue polypeptide: Acetate kinase 2 (399 aa).

Asparagine 10 contributes to the Mg(2+) binding site. Lysine 17 provides a ligand contact to ATP. Residue arginine 89 coordinates substrate. Aspartate 146 acts as the Proton donor/acceptor in catalysis. Residues 206–210 (HLGNG), 281–283 (DCR), and 329–333 (GIGEN) contribute to the ATP site. Residue glutamate 384 participates in Mg(2+) binding.

It belongs to the acetokinase family. Homodimer. The cofactor is Mg(2+). Mn(2+) serves as cofactor.

The protein resides in the cytoplasm. It carries out the reaction acetate + ATP = acetyl phosphate + ADP. It functions in the pathway metabolic intermediate biosynthesis; acetyl-CoA biosynthesis; acetyl-CoA from acetate: step 1/2. Its function is as follows. Catalyzes the formation of acetyl phosphate from acetate and ATP. Can also catalyze the reverse reaction. This chain is Acetate kinase 2, found in Neisseria meningitidis serogroup B (strain ATCC BAA-335 / MC58).